The primary structure comprises 200 residues: Adenylate kinase (200 aa).

10–15 contributes to the ATP binding site; the sequence is GAGKGT. The segment at 30-59 is NMP; the sequence is STGDMLRAAVAAETPVGLEAKAIMESGGLV. AMP-binding positions include T31, R36, 57 to 59, 85 to 88, and Q92; these read GLV and GFPR. The segment at 126–142 is LID; the sequence is KRAEETAARGQPVRKDD. Residue R127 coordinates ATP. The AMP site is built by R139 and R150. Position 178 (K178) interacts with ATP.

Belongs to the adenylate kinase family. As to quaternary structure, monomer.

The protein localises to the cytoplasm. It catalyses the reaction AMP + ATP = 2 ADP. It functions in the pathway purine metabolism; AMP biosynthesis via salvage pathway; AMP from ADP: step 1/1. Its function is as follows. Catalyzes the reversible transfer of the terminal phosphate group between ATP and AMP. Plays an important role in cellular energy homeostasis and in adenine nucleotide metabolism. The polypeptide is Adenylate kinase (Methylorubrum extorquens (strain PA1) (Methylobacterium extorquens)).